We begin with the raw amino-acid sequence, 145 residues long: Large ribosomal subunit protein uL15 (145 aa).

The interval 23–51 (IGSGWGKTGGRGHKGQKSRSGGKIRKSFE) is disordered. Positions 32–47 (GRGHKGQKSRSGGKIR) are enriched in basic residues.

This sequence belongs to the universal ribosomal protein uL15 family. In terms of assembly, part of the 50S ribosomal subunit.

Its function is as follows. Binds to the 23S rRNA. The chain is Large ribosomal subunit protein uL15 from Buchnera aphidicola subsp. Cinara cedri (strain Cc).